We begin with the raw amino-acid sequence, 93 residues long: Large ribosomal subunit protein uL23cz/uL23cy (93 aa).

This sequence belongs to the universal ribosomal protein uL23 family. As to quaternary structure, part of the 50S ribosomal subunit.

The protein resides in the plastid. It is found in the chloroplast. Functionally, binds to 23S rRNA. The chain is Large ribosomal subunit protein uL23cz/uL23cy (rpl23-A) from Citrus sinensis (Sweet orange).